Here is a 510-residue protein sequence, read N- to C-terminus: Glucose-6-phosphate 1-dehydrogenase (510 aa).

Residues 29–36 (GASGDLAK), R63, and K164 each bind NADP(+). D-glucose 6-phosphate-binding positions include K164, 194–198 (HYLGK), E232, and D251. The active-site Proton acceptor is H256. Residue K347 coordinates NADP(+). Residue K350 participates in D-glucose 6-phosphate binding. The NADP(+) site is built by K356, R360, and R382. Position 384 (Q384) interacts with D-glucose 6-phosphate. NADP(+)-binding positions include 390 to 392 (YIK), 410 to 412 (DLT), and R477.

The protein belongs to the glucose-6-phosphate dehydrogenase family.

The catalysed reaction is D-glucose 6-phosphate + NADP(+) = 6-phospho-D-glucono-1,5-lactone + NADPH + H(+). It functions in the pathway carbohydrate degradation; pentose phosphate pathway; D-ribulose 5-phosphate from D-glucose 6-phosphate (oxidative stage): step 1/3. Catalyzes the rate-limiting step of the oxidative pentose-phosphate pathway, which represents a route for the dissimilation of carbohydrates besides glycolysis. The main function of this enzyme is to provide reducing power (NADPH) and pentose phosphates for fatty acid and nucleic acid synthesis. The protein is Glucose-6-phosphate 1-dehydrogenase (gsdA) of Aspergillus niger.